The primary structure comprises 277 residues: F420-dependent methylenetetrahydromethanopterin dehydrogenase (277 aa).

It belongs to the MTD family.

The enzyme catalyses 5,10-methylenetetrahydromethanopterin + oxidized coenzyme F420-(gamma-L-Glu)(n) + 2 H(+) = 5,10-methenyl-5,6,7,8-tetrahydromethanopterin + reduced coenzyme F420-(gamma-L-Glu)(n). The protein operates within one-carbon metabolism; methanogenesis from CO(2); 5,10-methylene-5,6,7,8-tetrahydromethanopterin from 5,10-methenyl-5,6,7,8-tetrahydromethanopterin (coenzyme F420 route): step 1/1. Its function is as follows. Catalyzes the reversible reduction of methenyl-H(4)MPT(+) to methylene-H(4)MPT. The sequence is that of F420-dependent methylenetetrahydromethanopterin dehydrogenase from Methanococcus maripaludis (strain DSM 14266 / JCM 13030 / NBRC 101832 / S2 / LL).